Consider the following 224-residue polypeptide: Response regulator protein GraR (224 aa).

Positions 2–115 (DILLVEDDMT…VLIAKLQAIY (114 aa)) constitute a Response regulatory domain. Position 51 is a 4-aspartylphosphate (Asp51). Residues 126–224 (KRVLSWQDAI…KIGKGYMAHG (99 aa)) constitute a DNA-binding region (ompR/PhoB-type).

Phosphorylated by GraS.

The protein resides in the cytoplasm. Its function is as follows. Member of the two-component regulatory system GraR/GraS involved in resistance against cationic antimicrobial peptides (CAMPs). This chain is Response regulator protein GraR (graR), found in Staphylococcus saprophyticus subsp. saprophyticus (strain ATCC 15305 / DSM 20229 / NCIMB 8711 / NCTC 7292 / S-41).